Here is a 144-residue protein sequence, read N- to C-terminus: Maximins 7/H13 (144 aa).

The N-terminal stretch at 1-18 (MNFKYIVAVSFLIASAYA) is a signal peptide. A propeptide spanning residues 19 to 43 (RSEENDEQSLSQRDVLEEESLREIR) is cleaved from the precursor. Residue Asn-70 is modified to Asparagine amide. Residues 74-123 (TAEDHEVMKRLEAVMRDLDSLDYPEEAAERETRGFNQEEIANLFTKKEKR) constitute a propeptide that is removed on maturation. Leucine amide is present on Leu-143.

This sequence belongs to the bombinin family. As to expression, expressed by the skin glands.

It is found in the secreted. Maximin-7 shows antimicrobial activity against bacteria and against the fungus C.albicans. It has little hemolytic activity. In terms of biological role, maximin-H13 shows antimicrobial activity against bacteria and against the fungus C.albicans. Shows strong hemolytic activity. The protein is Maximins 7/H13 of Bombina maxima (Giant fire-bellied toad).